Reading from the N-terminus, the 449-residue chain is Glucose-6-phosphate isomerase (449 aa).

E291 acts as the Proton donor in catalysis. Active-site residues include H312 and K426.

The protein belongs to the GPI family.

The protein resides in the cytoplasm. The enzyme catalyses alpha-D-glucose 6-phosphate = beta-D-fructose 6-phosphate. The protein operates within carbohydrate biosynthesis; gluconeogenesis. It participates in carbohydrate degradation; glycolysis; D-glyceraldehyde 3-phosphate and glycerone phosphate from D-glucose: step 2/4. In terms of biological role, catalyzes the reversible isomerization of glucose-6-phosphate to fructose-6-phosphate. The polypeptide is Glucose-6-phosphate isomerase (Streptococcus pneumoniae serotype 19F (strain G54)).